Here is a 487-residue protein sequence, read N- to C-terminus: GTPase Der (487 aa).

EngA-type G domains are found at residues 3–167 and 203–378; these read FTLA…EGFA and LQIA…DIWN. GTP-binding positions include 9-16, 56-60, 119-122, 209-216, 256-260, and 321-324; these read GRPNVGKS, DTAGL, NKAE, GRPNAGKS, DTAGM, and NKWD. The KH-like domain occupies 379 to 463; sequence RRITTARLNT…PIRLTMRGQG (85 aa). Positions 451 to 487 are disordered; the sequence is PGTPIRLTMRGQGDKNPFKERKFRTPSRLRKHLGKKD. A compositionally biased stretch (basic residues) spans 471–487; the sequence is RKFRTPSRLRKHLGKKD.

It belongs to the TRAFAC class TrmE-Era-EngA-EngB-Septin-like GTPase superfamily. EngA (Der) GTPase family. Associates with the 50S ribosomal subunit.

In terms of biological role, GTPase that plays an essential role in the late steps of ribosome biogenesis. This is GTPase Der from Cereibacter sphaeroides (strain ATCC 17029 / ATH 2.4.9) (Rhodobacter sphaeroides).